Consider the following 109-residue polypeptide: MTMKLIWDKFYVSIIFVLTCIILGIILMCTVVGGGNDYSEVNVSEGDSLWALADQYAGKSDMAKADFVSWVEKENNLADGHVEAGDSVVIPVHKTKLIKSDSTIQLANQ.

The region spanning 39–90 (SEVNVSEGDSLWALADQYAGKSDMAKADFVSWVEKENNLADGHVEAGDSVVI) is the LysM domain.

The protein belongs to the YneA family.

The protein resides in the cytoplasm. In terms of biological role, inhibits cell division during the SOS response. Affects a later stage of the cell division protein assembly, after the assembly of the Z ring, by probably suppressing recruitment of FtsL and/or DivIC to the division machinery. This Listeria monocytogenes serotype 4b (strain CLIP80459) protein is Cell division suppressor protein YneA.